The chain runs to 95 residues: Aspartyl/glutamyl-tRNA(Asn/Gln) amidotransferase subunit C (95 aa).

Belongs to the GatC family. In terms of assembly, heterotrimer of A, B and C subunits.

The catalysed reaction is L-glutamyl-tRNA(Gln) + L-glutamine + ATP + H2O = L-glutaminyl-tRNA(Gln) + L-glutamate + ADP + phosphate + H(+). The enzyme catalyses L-aspartyl-tRNA(Asn) + L-glutamine + ATP + H2O = L-asparaginyl-tRNA(Asn) + L-glutamate + ADP + phosphate + 2 H(+). Functionally, allows the formation of correctly charged Asn-tRNA(Asn) or Gln-tRNA(Gln) through the transamidation of misacylated Asp-tRNA(Asn) or Glu-tRNA(Gln) in organisms which lack either or both of asparaginyl-tRNA or glutaminyl-tRNA synthetases. The reaction takes place in the presence of glutamine and ATP through an activated phospho-Asp-tRNA(Asn) or phospho-Glu-tRNA(Gln). The polypeptide is Aspartyl/glutamyl-tRNA(Asn/Gln) amidotransferase subunit C (Prochlorococcus marinus (strain NATL1A)).